A 459-amino-acid chain; its full sequence is Bifunctional protein GlmU (459 aa).

Residues Met1 to Arg230 form a pyrophosphorylase region. UDP-N-acetyl-alpha-D-glucosamine contacts are provided by residues Leu9–Gly12, Lys23, Gln73, and Gly78–Thr79. Asp103 serves as a coordination point for Mg(2+). UDP-N-acetyl-alpha-D-glucosamine contacts are provided by Gly140, Glu155, Asn170, and Asn228. Asn228 provides a ligand contact to Mg(2+). Residues Val231–Asn251 are linker. The segment at Gly252–Ser459 is N-acetyltransferase. 2 residues coordinate UDP-N-acetyl-alpha-D-glucosamine: Arg333 and Lys351. Residue His363 is the Proton acceptor of the active site. Residues Tyr366 and Asn377 each contribute to the UDP-N-acetyl-alpha-D-glucosamine site. Residues Asn386–Tyr387, Ala423, and Arg440 contribute to the acetyl-CoA site.

The protein in the N-terminal section; belongs to the N-acetylglucosamine-1-phosphate uridyltransferase family. In the C-terminal section; belongs to the transferase hexapeptide repeat family. Homotrimer. It depends on Mg(2+) as a cofactor.

The protein localises to the cytoplasm. It catalyses the reaction alpha-D-glucosamine 1-phosphate + acetyl-CoA = N-acetyl-alpha-D-glucosamine 1-phosphate + CoA + H(+). The enzyme catalyses N-acetyl-alpha-D-glucosamine 1-phosphate + UTP + H(+) = UDP-N-acetyl-alpha-D-glucosamine + diphosphate. It functions in the pathway nucleotide-sugar biosynthesis; UDP-N-acetyl-alpha-D-glucosamine biosynthesis; N-acetyl-alpha-D-glucosamine 1-phosphate from alpha-D-glucosamine 6-phosphate (route II): step 2/2. The protein operates within nucleotide-sugar biosynthesis; UDP-N-acetyl-alpha-D-glucosamine biosynthesis; UDP-N-acetyl-alpha-D-glucosamine from N-acetyl-alpha-D-glucosamine 1-phosphate: step 1/1. It participates in bacterial outer membrane biogenesis; LPS lipid A biosynthesis. In terms of biological role, catalyzes the last two sequential reactions in the de novo biosynthetic pathway for UDP-N-acetylglucosamine (UDP-GlcNAc). The C-terminal domain catalyzes the transfer of acetyl group from acetyl coenzyme A to glucosamine-1-phosphate (GlcN-1-P) to produce N-acetylglucosamine-1-phosphate (GlcNAc-1-P), which is converted into UDP-GlcNAc by the transfer of uridine 5-monophosphate (from uridine 5-triphosphate), a reaction catalyzed by the N-terminal domain. The polypeptide is Bifunctional protein GlmU (Bacillus cereus (strain G9842)).